The following is a 991-amino-acid chain: Antigenic heat-stable 120 kDa protein (991 aa).

3 disordered regions span residues aspartate 1 to leucine 37, threonine 54 to proline 73, and glycine 348 to proline 384. Over residues glutamate 12 to leucine 29 the composition is skewed to basic and acidic residues. Residues glycine 348–glutamine 373 are compositionally biased toward polar residues.

The protein localises to the cytoplasm. The protein is Antigenic heat-stable 120 kDa protein (sca4) of Rickettsia sibirica.